The primary structure comprises 531 residues: Ceramide kinase (531 aa).

Residues 1–115 (MGAMGAAEPL…SADEQLCHLW (115 aa)) form an essential for enzyme activity region. The tract at residues 1-125 (MGAMGAAEPL…LQTLRGLLES (125 aa)) is required for binding to sulfatide and phosphoinositides. Residues 128–278 (SRPKHLLVFI…IDVSSVHYHN (151 aa)) form the DAGKc domain. ATP is bound by residues 138–140 (NPF) and 170–174 (TEHAN). 195-198 (GGDG) contacts substrate. Residue D197 is the Proton donor/acceptor of the active site. Residues E202, 239–241 (GST), R304, and R310 contribute to the ATP site. A phosphoserine mark is found at S340 and S408. ATP is bound at residue 502–504 (DGE).

Requires Ca(2+) as cofactor. Mg(2+) is required as a cofactor. In terms of tissue distribution, high level expression in heart, brain, testis and pancreas; low expression in spleen, liver and lung; not detected in skeletal muscle.

It is found in the cytoplasm. The protein localises to the cell membrane. The enzyme catalyses an N-acylsphing-4-enine + ATP = an N-acylsphing-4-enine 1-phosphate + ADP + H(+). It carries out the reaction N-(hexanoyl)sphing-4-enine + ATP = N-hexanoylsphing-4-enine 1-phosphate + ADP + H(+). It catalyses the reaction N-(acetyl)-sphing-4-enine + ATP = N-(acetyl)-sphing-4-enine-1-phosphate + ADP + H(+). The catalysed reaction is N-hexadecanoylsphing-4-enine + ATP = N-(hexadecanoyl)-sphing-4-enine-1-phosphate + ADP + H(+). The enzyme catalyses N-hexanoyl-(4R)-hydroxysphinganine + ATP = N-hexanoyl-(4R)-hydroxysphinganine-1-phosphate + ADP + H(+). Functionally, catalyzes specifically the phosphorylation of ceramide to form ceramide 1-phosphate. Acts efficiently on natural and analog ceramides (C6, C8, C16 ceramides, and C8-dihydroceramide), to a lesser extent on C2-ceramide and C6-dihydroceramide, but not on other lipids, such as various sphingosines. Shows a greater preference for D-erythro isomer of ceramides. Binds phosphoinositides. This chain is Ceramide kinase (Cerk), found in Mus musculus (Mouse).